A 466-amino-acid polypeptide reads, in one-letter code: Cell division protein FtsP (466 aa).

Positions 1 to 28 (MGNYSRRRFLQGSLAIVAGNVLPCAAMA) form a signal peptide, tat-type signal.

It belongs to the FtsP family. Post-translationally, predicted to be exported by the Tat system. The position of the signal peptide cleavage has not been experimentally proven.

The protein resides in the periplasm. In terms of biological role, cell division protein that is required for growth during stress conditions. May be involved in protecting or stabilizing the divisomal assembly under conditions of stress. In Gallibacterium anatis (strain UMN179) (Pasteurella anatis), this protein is Cell division protein FtsP.